Reading from the N-terminus, the 55-residue chain is Large ribosomal subunit protein bL32c (55 aa).

Belongs to the bacterial ribosomal protein bL32 family.

It localises to the plastid. Its subcellular location is the chloroplast. In Nicotiana sylvestris (Wood tobacco), this protein is Large ribosomal subunit protein bL32c.